A 159-amino-acid chain; its full sequence is MSARPEPITLYVDADACPVKAEIYKVAERHALHVHVVSNQPIAIPRDDRIHRVVVASGPDVADDWIAERVSRGDVVVTADIPLAARCVKAGADVIAPNGKAHTEATIGATLATRNLMDDLRSAGQITGGPKPFSPRDRSAFLSALDLAIVRLKRAGFTT.

The protein belongs to the UPF0178 family.

In Azorhizobium caulinodans (strain ATCC 43989 / DSM 5975 / JCM 20966 / LMG 6465 / NBRC 14845 / NCIMB 13405 / ORS 571), this protein is UPF0178 protein AZC_4000.